We begin with the raw amino-acid sequence, 582 residues long: Hemagglutinin-neuraminidase (582 aa).

Residues 35-55 traverse the membrane as a helical segment; sequence ILVLSVQAVTLILVIVNLGEL. 3 disulfides stabilise this stretch: Cys-178-Cys-202, Cys-192-Cys-253, and Cys-244-Cys-257. Asn-284 and Asn-329 each carry an N-linked (GlcNAc...) asparagine; by host glycan. 3 disulfides stabilise this stretch: Cys-350-Cys-471, Cys-382-Cys-392, and Cys-465-Cys-475. Asn-400 and Asn-448 each carry an N-linked (GlcNAc...) asparagine; by host glycan. N-linked (GlcNAc...) asparagine; by host glycosylation is present at Asn-507. Cys-545 and Cys-556 are oxidised to a cystine.

Belongs to the paramyxoviruses hemagglutinin-neuraminidase family. In terms of assembly, homotetramer; composed of disulfide-linked homodimers. Interacts with F protein trimer.

Its subcellular location is the virion membrane. It localises to the host cell membrane. The catalysed reaction is Hydrolysis of alpha-(2-&gt;3)-, alpha-(2-&gt;6)-, alpha-(2-&gt;8)- glycosidic linkages of terminal sialic acid residues in oligosaccharides, glycoproteins, glycolipids, colominic acid and synthetic substrates.. Functionally, attaches the virus to alpha-2,3-linked sialic acid-containing cell receptors and thereby initiating infection. Binding of HN protein to the receptor induces a conformational change that allows the F protein to trigger virion/cell membranes fusion. Binds to the glycan motifs sialyl Lewis (SLe) and GM2 ganglioside (GM2-glycan). Neuraminidase activity ensures the efficient spread of the virus by dissociating the mature virions from the neuraminic acid containing glycoproteins. In Homo sapiens (Human), this protein is Hemagglutinin-neuraminidase (HN).